The chain runs to 150 residues: Arginine repressor (150 aa).

This sequence belongs to the ArgR family.

The protein localises to the cytoplasm. It participates in amino-acid biosynthesis; L-arginine biosynthesis [regulation]. In terms of biological role, regulates arginine biosynthesis genes. This is Arginine repressor from Clostridium botulinum (strain Loch Maree / Type A3).